A 177-amino-acid polypeptide reads, in one-letter code: Nucleoside triphosphate/diphosphate phosphatase (177 aa).

Arginine 24 acts as the Proton donor in catalysis. Mg(2+) contacts are provided by asparagine 88, aspartate 104, aspartate 106, aspartate 108, aspartate 121, and glutamate 124.

It belongs to the Ntdp family. Mg(2+) is required as a cofactor.

It carries out the reaction a ribonucleoside 5'-triphosphate + H2O = a ribonucleoside 5'-diphosphate + phosphate + H(+). The catalysed reaction is a ribonucleoside 5'-diphosphate + H2O = a ribonucleoside 5'-phosphate + phosphate + H(+). Its function is as follows. Has nucleoside phosphatase activity towards nucleoside triphosphates and nucleoside diphosphates. The chain is Nucleoside triphosphate/diphosphate phosphatase from Geobacillus sp. (strain WCH70).